The chain runs to 503 residues: TGF-beta receptor type-1 (503 aa).

The N-terminal stretch at 1–29 is a signal peptide; sequence MEAAAAAPRRPQLLIVLVAAATLLPGAKA. The Extracellular segment spans residues 30–126; that stretch reads LQCFCHLCTK…QSAGLGPVEL (97 aa). Cystine bridges form between Cys32/Cys50, Cys34/Cys37, Cys44/Cys67, Cys82/Cys96, and Cys97/Cys102. An N-linked (GlcNAc...) asparagine glycan is attached at Asn41. The chain crosses the membrane as a helical span at residues 127-147; the sequence is AAVIAGPVCFVCIALMLMVYI. Residues 148-503 are Cytoplasmic-facing; the sequence is CHNRTVIHHR…QLSQQEGIKM (356 aa). The residue at position 165 (Ser165) is a Phosphoserine. A GS domain is found at 175–204; sequence TTLKDLIYDMTTSGSGSGLPLLVQRTIART. A phosphothreonine; by TGFBR2 mark is found at Thr185 and Thr186. Residues Ser187, Ser189, and Ser191 each carry the phosphoserine; by TGFBR2 modification. Residues 193–194 carry the FKBP1A-binding motif; the sequence is LP. A Protein kinase domain is found at 205-495; sequence IVLQESIGKG…LRIKKTLSQL (291 aa). ATP-binding positions include 211–219 and Lys232; that span reads IGKGRFGEV. Residue Lys268 forms a Glycyl lysine isopeptide (Lys-Gly) (interchain with G-Cter in ubiquitin) linkage. Asp333 functions as the Proton acceptor in the catalytic mechanism. Lys391 is covalently cross-linked (Glycyl lysine isopeptide (Lys-Gly) (interchain with G-Cter in SUMO)).

Belongs to the protein kinase superfamily. TKL Ser/Thr protein kinase family. TGFB receptor subfamily. Homodimer; in the endoplasmic reticulum but also at the cell membrane. Heterohexamer; TGFB1, TGFB2 and TGFB3 homodimeric ligands assemble a functional receptor composed of two TGFBR1 and TGFBR2 heterodimers to form a ligand-receptor heterohexamer. The respective affinity of TGBRB1 and TGFBR2 for the ligands may modulate the kinetics of assembly of the receptor and may explain the different biological activities of TGFB1, TGFB2 and TGFB3. Component of a complex composed of TSC22D1 (via N-terminus), TGFBR1 and TGFBR2; the interaction between TSC22D1 and TGFBR1 is inhibited by SMAD7 and promoted by TGFB1. Interacts with CD109; inhibits TGF-beta receptor activation in keratinocytes. Interacts with RBPMS. Interacts (unphosphorylated) with FKBP1A; prevents TGFBR1 phosphorylation by TGFBR2 and stabilizes it in the inactive conformation. Interacts with SMAD2, SMAD3 and ZFYVE9; ZFYVE9 recruits SMAD2 and SMAD3 to the TGF-beta receptor. Interacts with TRAF6 and MAP3K7; induces MAP3K7 activation by TRAF6. Interacts with PARD6A; involved in TGF-beta induced epithelial to mesenchymal transition. Interacts with NEDD4L. Interacts with SMAD7, SMURF1 and SMURF2; SMAD7 recruits NEDD4L, SMURF1 and SMURF2 to the TGF-beta receptor. Interacts with USP15 and VPS39. Interacts with SDCBP (via C-terminus). Interacts with CAV1 and this interaction is impaired in the presence of SDCBP. Interacts with APPL1; interaction is TGF beta dependent; mediates trafficking of the TGFBR1 from the endosomes to the nucleus via microtubules in a TRAF6-dependent manner. Interacts with GPR50; this interaction promotes the constitutive activation of SMAD signaling pathway. Mg(2+) serves as cofactor. It depends on Mn(2+) as a cofactor. In terms of processing, phosphorylated at basal levels in the absence of ligand. Activated upon phosphorylation by TGFBR2, mainly in the GS domain. Phosphorylation in the GS domain abrogates FKBP1A-binding. N-Glycosylated. Post-translationally, ubiquitinated; undergoes ubiquitination catalyzed by several E3 ubiquitin ligases including SMURF1, SMURF2 and NEDD4L2. Results in the proteasomal and/or lysosomal degradation of the receptor thereby negatively regulating its activity. Deubiquitinated by USP15, leading to stabilization of the protein and enhanced TGF-beta signal. Its ubiquitination and proteasome-mediated degradation is negatively regulated by SDCBP. Ubiquitinated by BFAR via'Lys-63'-linked ubiquitination at Lys-268, leading to TGF-beta signaling activation.

Its subcellular location is the cell membrane. It localises to the cell junction. The protein resides in the tight junction. The protein localises to the membrane raft. It is found in the cell surface. It catalyses the reaction L-threonyl-[receptor-protein] + ATP = O-phospho-L-threonyl-[receptor-protein] + ADP + H(+). It carries out the reaction L-seryl-[receptor-protein] + ATP = O-phospho-L-seryl-[receptor-protein] + ADP + H(+). Kept in an inactive conformation by FKBP1A preventing receptor activation in absence of ligand. CD109 is another inhibitor of the receptor. Its function is as follows. Transmembrane serine/threonine kinase forming with the TGF-beta type II serine/threonine kinase receptor, TGFBR2, the non-promiscuous receptor for the TGF-beta cytokines TGFB1, TGFB2 and TGFB3. Transduces the TGFB1, TGFB2 and TGFB3 signal from the cell surface to the cytoplasm and is thus regulating a plethora of physiological and pathological processes including cell cycle arrest in epithelial and hematopoietic cells, control of mesenchymal cell proliferation and differentiation, wound healing, extracellular matrix production, immunosuppression and carcinogenesis. The formation of the receptor complex composed of 2 TGFBR1 and 2 TGFBR2 molecules symmetrically bound to the cytokine dimer results in the phosphorylation and the activation of TGFBR1 by the constitutively active TGFBR2. Activated TGFBR1 phosphorylates SMAD2 which dissociates from the receptor and interacts with SMAD4. The SMAD2-SMAD4 complex is subsequently translocated to the nucleus where it modulates the transcription of the TGF-beta-regulated genes. This constitutes the canonical SMAD-dependent TGF-beta signaling cascade. Also involved in non-canonical, SMAD-independent TGF-beta signaling pathways. For instance, TGFBR1 induces TRAF6 autoubiquitination which in turn results in MAP3K7 ubiquitination and activation to trigger apoptosis. Also regulates epithelial to mesenchymal transition through a SMAD-independent signaling pathway through PARD6A phosphorylation and activation. This Mus musculus (Mouse) protein is TGF-beta receptor type-1 (Tgfbr1).